The primary structure comprises 1502 residues: Autophagy-related protein 2 (1502 aa).

The span at 211–222 (QLSPTNSHQNTD) shows a compositional bias: polar residues. Residues 211–234 (QLSPTNSHQNTDSDVEENENTDSE) are disordered. Residues 223-234 (SDVEENENTDSE) are compositionally biased toward acidic residues.

This sequence belongs to the ATG2 family.

It localises to the preautophagosomal structure membrane. It is found in the endoplasmic reticulum membrane. The enzyme catalyses a 1,2-diacyl-sn-glycero-3-phosphocholine(in) = a 1,2-diacyl-sn-glycero-3-phosphocholine(out). The catalysed reaction is a 1,2-diacyl-sn-glycero-3-phospho-L-serine(in) = a 1,2-diacyl-sn-glycero-3-phospho-L-serine(out). It catalyses the reaction a 1,2-diacyl-sn-glycero-3-phosphoethanolamine(in) = a 1,2-diacyl-sn-glycero-3-phosphoethanolamine(out). Lipid transfer protein required for autophagosome completion and peroxisome degradation. Tethers the edge of the isolation membrane (IM) to the endoplasmic reticulum (ER) and mediates direct lipid transfer from ER to IM for IM expansion. ATG2 binds to the ER exit site (ERES), which is the membrane source for autophagosome formation, using basic residues in its N-terminal region (NR) and to the expanding edge of the IM through its C-terminal region. The latter binding is assisted by an ATG18-PtdIns3P interaction. ATG2 then extracts phospholipids from the membrane source using its NR and transfers them to ATG9 to the IM through its predicted beta-sheet-rich structure for membrane expansion. The chain is Autophagy-related protein 2 (ATG2) from Kluyveromyces lactis (strain ATCC 8585 / CBS 2359 / DSM 70799 / NBRC 1267 / NRRL Y-1140 / WM37) (Yeast).